We begin with the raw amino-acid sequence, 257 residues long: 5'-nucleotidase SurE (257 aa).

The a divalent metal cation site is built by D11, D12, S42, and N99.

This sequence belongs to the SurE nucleotidase family. A divalent metal cation serves as cofactor.

It is found in the cytoplasm. It carries out the reaction a ribonucleoside 5'-phosphate + H2O = a ribonucleoside + phosphate. Its function is as follows. Nucleotidase that shows phosphatase activity on nucleoside 5'-monophosphates. This chain is 5'-nucleotidase SurE, found in Flavobacterium psychrophilum (strain ATCC 49511 / DSM 21280 / CIP 103535 / JIP02/86).